A 202-amino-acid chain; its full sequence is Securin-2 (202 aa).

Residues 60–105 (TRKALGTVNRATEKSVKTNGPRKQKQPSFSAKKMTEKTVKTKSSVP) form a disordered region. The D-box signature appears at 61 to 64 (RKAL). The SH3-binding signature appears at 163–173 (PPSPVKMPSPP).

The protein belongs to the securin family. Expressed at low levels in the pituitary, liver, spleen, prostate, testis, ovary, small intestine and colon. Also expressed in various pituitary, testicular, liver and ovarian tumors.

It localises to the cytoplasm. The protein localises to the nucleus. In Homo sapiens (Human), this protein is Securin-2 (PTTG2).